Consider the following 391-residue polypeptide: uncharacterized protein (391 aa).

WD repeat units follow at residues 137 to 179 and 182 to 222; these read VNDI…PILA and PLSS…SAEE.

The protein resides in the cytoplasm. It is found in the nucleus. This is an uncharacterized protein from Schizosaccharomyces pombe (strain 972 / ATCC 24843) (Fission yeast).